Here is a 509-residue protein sequence, read N- to C-terminus: Taxoid 14-beta-hydroxylase (509 aa).

Transmembrane regions (helical) follow at residues 20–40, 186–206, and 218–238; these read AILF…LLFL, SVVA…FFNI, and LLEI…GFAY. Cys443 is a binding site for heme.

Belongs to the cytochrome P450 family.

The protein resides in the microsome membrane. The catalysed reaction is 10beta-hydroxytaxa-4(20),11-dien-5alpha-yl acetate + NADPH + O2 + H(+) = 10beta,14beta-dihydroxytaxa-4(20),11-dien-5alpha-yl acetate + NADP(+) + H2O. It functions in the pathway alkaloid biosynthesis; taxol biosynthesis. Its function is as follows. Catalyzes the conversion of 5-alpha-acetoxy-10beta-ol to 5-alpha-acetoxy-10beta,14beta-dihydroxy taxadiene. Also acts on taxa-4(20),11-dien-5-alpha-yl acetate. The polypeptide is Taxoid 14-beta-hydroxylase (Taxus cuspidata (Japanese yew)).